Reading from the N-terminus, the 201-residue chain is Large ribosomal subunit protein uL4 (201 aa).

The disordered stretch occupies residues 43-69; the sequence is TKAQKGRSDVSGGGAKPWKQKGSGRAR.

The protein belongs to the universal ribosomal protein uL4 family. In terms of assembly, part of the 50S ribosomal subunit.

Its function is as follows. One of the primary rRNA binding proteins, this protein initially binds near the 5'-end of the 23S rRNA. It is important during the early stages of 50S assembly. It makes multiple contacts with different domains of the 23S rRNA in the assembled 50S subunit and ribosome. Forms part of the polypeptide exit tunnel. The chain is Large ribosomal subunit protein uL4 from Thioalkalivibrio sulfidiphilus (strain HL-EbGR7).